The sequence spans 729 residues: Isocitrate dehydrogenase [NADP] (729 aa).

Positions 83 and 85 each coordinate NADP(+). Residues Ser-121, Asn-124, Arg-128, Arg-134, and Lys-244 each coordinate D-threo-isocitrate. Position 124 (Asn-124) interacts with NADP(+). Asp-337 lines the Mg(2+) pocket. Positions 407 and 534 each coordinate D-threo-isocitrate. Asp-535 and Asp-539 together coordinate Mg(2+). Positions 572, 576, 587, 589, and 636 each coordinate NADP(+).

The protein belongs to the monomeric-type IDH family. As to quaternary structure, monomer. Mg(2+) is required as a cofactor. It depends on Mn(2+) as a cofactor.

It carries out the reaction D-threo-isocitrate + NADP(+) = 2-oxoglutarate + CO2 + NADPH. Catalyzes the oxidative decarboxylation of isocitrate to 2-oxoglutarate and carbon dioxide with the concomitant reduction of NADP(+). In Corynebacterium efficiens (strain DSM 44549 / YS-314 / AJ 12310 / JCM 11189 / NBRC 100395), this protein is Isocitrate dehydrogenase [NADP].